Reading from the N-terminus, the 160-residue chain is uncharacterized protein (160 aa).

The Cupin type-2 domain maps to 37–110 (LMSLKPKEDI…TDYLKLYTIY (74 aa)).

It localises to the virion. This is an uncharacterized protein from Acanthamoeba polyphaga mimivirus (APMV).